Consider the following 215-residue polypeptide: Phosphatidylserine decarboxylase proenzyme (215 aa).

Ser184 acts as the Schiff-base intermediate with substrate; via pyruvic acid in catalysis. Pyruvic acid (Ser); by autocatalysis is present on Ser184.

It belongs to the phosphatidylserine decarboxylase family. PSD-A subfamily. In terms of assembly, heterodimer of a large membrane-associated beta subunit and a small pyruvoyl-containing alpha subunit. Requires pyruvate as cofactor. In terms of processing, is synthesized initially as an inactive proenzyme. Formation of the active enzyme involves a self-maturation process in which the active site pyruvoyl group is generated from an internal serine residue via an autocatalytic post-translational modification. Two non-identical subunits are generated from the proenzyme in this reaction, and the pyruvate is formed at the N-terminus of the alpha chain, which is derived from the carboxyl end of the proenzyme. The post-translation cleavage follows an unusual pathway, termed non-hydrolytic serinolysis, in which the side chain hydroxyl group of the serine supplies its oxygen atom to form the C-terminus of the beta chain, while the remainder of the serine residue undergoes an oxidative deamination to produce ammonia and the pyruvoyl prosthetic group on the alpha chain.

Its subcellular location is the cell membrane. The enzyme catalyses a 1,2-diacyl-sn-glycero-3-phospho-L-serine + H(+) = a 1,2-diacyl-sn-glycero-3-phosphoethanolamine + CO2. It participates in phospholipid metabolism; phosphatidylethanolamine biosynthesis; phosphatidylethanolamine from CDP-diacylglycerol: step 2/2. Catalyzes the formation of phosphatidylethanolamine (PtdEtn) from phosphatidylserine (PtdSer). The polypeptide is Phosphatidylserine decarboxylase proenzyme (Ralstonia nicotianae (strain ATCC BAA-1114 / GMI1000) (Ralstonia solanacearum)).